A 352-amino-acid polypeptide reads, in one-letter code: Ni-sirohydrochlorin a,c-diamide reductive cyclase complex, component CfbD (352 aa).

Belongs to the NifD/NifK/NifE/NifN family. In terms of assembly, homodimer or monomer. The Ni-sirohydrochlorin a,c-diamide reductive cyclase complex is composed of a NifH homolog component CfbC and a NifD homolog component CfbD. [4Fe-4S] cluster is required as a cofactor.

It carries out the reaction Ni-sirohydrochlorin a,c-diamide + 3 AH2 + ATP + H2O = 15,17(3)-seco-F430-17(3)-acid + 3 A + ADP + phosphate. Involved in the biosynthesis of the unique nickel-containing tetrapyrrole coenzyme F430, the prosthetic group of methyl-coenzyme M reductase (MCR), which plays a key role in methanogenesis and anaerobic methane oxidation. Catalyzes both the six-electron reduction of the tetrahydroporphyrin ring system and the gamma-lactamization of the c-acetamide side chain of Ni-sirohydrochlorin a,c-diamide to yield 15,17(3)-seco-F430-17(3)-acid (seco-F430), the last intermediate in the biosynthesis of the coenzyme F430. The chain is Ni-sirohydrochlorin a,c-diamide reductive cyclase complex, component CfbD from Methanocaldococcus jannaschii (strain ATCC 43067 / DSM 2661 / JAL-1 / JCM 10045 / NBRC 100440) (Methanococcus jannaschii).